The chain runs to 244 residues: B3 domain-containing protein At2g36080 (244 aa).

The TF-B3 DNA-binding region spans 38 to 144; the sequence is FEKPLTPSDV…RFFIGWRRRG (107 aa).

The protein resides in the nucleus. The sequence is that of B3 domain-containing protein At2g36080 (ARF31) from Arabidopsis thaliana (Mouse-ear cress).